The following is a 550-amino-acid chain: Eukaryotic translation initiation factor 3 subunit L (550 aa).

The segment at 1 to 20 (MVRDSFDGGHTGDPERDLAY) is disordered. Residues 309-503 (EATKIFVNCL…IDDSTTDLDF (195 aa)) enclose the PCI domain.

This sequence belongs to the eIF-3 subunit L family. As to quaternary structure, component of the eukaryotic translation initiation factor 3 (eIF-3) complex.

The protein localises to the cytoplasm. Its function is as follows. Component of the eukaryotic translation initiation factor 3 (eIF-3) complex, which is involved in protein synthesis of a specialized repertoire of mRNAs and, together with other initiation factors, stimulates binding of mRNA and methionyl-tRNAi to the 40S ribosome. The eIF-3 complex specifically targets and initiates translation of a subset of mRNAs involved in cell proliferation. This is Eukaryotic translation initiation factor 3 subunit L from Brugia malayi (Filarial nematode worm).